An 88-amino-acid chain; its full sequence is Beta-insect excitatory toxin LqhIT1b (88 aa).

The N-terminal stretch at 1–18 is a signal peptide; the sequence is MKFFLLFLVVLPIMGVLG. In terms of domain architecture, LCN-type CS-alpha/beta spans 20 to 83; the sequence is KNGYAVDSKG…ISDTTKKYCD (64 aa). Cystine bridges form between cysteine 34–cysteine 55, cysteine 40–cysteine 60, cysteine 44–cysteine 62, and cysteine 56–cysteine 82.

The protein belongs to the long (4 C-C) scorpion toxin superfamily. Sodium channel inhibitor family. Beta subfamily. Expressed by the venom gland.

Its subcellular location is the secreted. Its function is as follows. Excitatory insect toxins induce a spastic paralysis. They bind voltage-independently at site-4 of sodium channels (Nav) and shift the voltage of activation toward more negative potentials thereby affecting sodium channel activation and promoting spontaneous and repetitive firing. The chain is Beta-insect excitatory toxin LqhIT1b from Leiurus hebraeus (Hebrew deathstalker scorpion).